The sequence spans 691 residues: MKKNIINTWYSFVNIPNVIVPDIEKEIRRMENGARSSFSDDDGDDDSASMFEESENETPHARDSCRNNSQRRDPSQREQYLPGAIALFNVNNSSNKEQEPKEKKKKKKEKKSKSGDKNENKKDSEKKKKKEKEKEKKNKEEKGKDKKEEEKKEVMVIDPAGNMYYNWLFCITLPVMYNWTMVIARACFDELQSDYLEYWIIFDYLSDIVYLLDMFVRTRTGYLEQGLLVREEAKLIEKYKSNLQFKLDFLSVIPTDLLYFKLGWNYPEIRLNRLLRISRMFEFFQRTETRTNYPNIFRISNLVMYIVIIIHWNACVYFSISKAIGFGNDTWVYPDVNDPEFGRLARKYVYSLYWSTLTLTTIGETPPPVRDSEYVFVVVDFLIGVLIFATIVGNIGSMISNMNAARAEFQARIDAIKQYMHFRNVSKDMEKRVIKWFDYLWTNKKTVDEKEVLKYLPDKLRAEIAINVHLDTLKKVRIFADCEAGLLVELVLKLQPQVYSPGDYICKKGDIGREMYIIKEGKLAVVADDGITQFVVLSDGSYFGEISILNIKGSKAGNRRTANIKSIGYSDLFCLSKDDLMEALTEYPDAKTMLEEKGKQILMKDGLLDINIANAGSDPKDLEEKVTRMEGSVDLLQTRFARILAEYESMQQKLKQRLTKVERFLKPIIDTEFSALEGTGDESRPLDSTQD.

At 1-168 the chain is on the cytoplasmic side; sequence MKKNIINTWY…PAGNMYYNWL (168 aa). The interval 31 to 151 is disordered; the sequence is ENGARSSFSD…KGKDKKEEEK (121 aa). Residues 39 to 56 are compositionally biased toward acidic residues; sequence SDDDGDDDSASMFEESEN. 2 stretches are compositionally biased toward basic and acidic residues: residues 57-76 and 112-151; these read ETPH…DPSQ and SKSG…EEEK. Residues 169–190 form a helical membrane-spanning segment; that stretch reads FCITLPVMYNWTMVIARACFDE. Topologically, residues 191-200 are extracellular; sequence LQSDYLEYWI. Residues 201-221 form a helical membrane-spanning segment; that stretch reads IFDYLSDIVYLLDMFVRTRTG. Topologically, residues 222-246 are cytoplasmic; that stretch reads YLEQGLLVREEAKLIEKYKSNLQFK. The chain crosses the membrane as a helical span at residues 247 to 265; that stretch reads LDFLSVIPTDLLYFKLGWN. Residues 266–270 lie on the Extracellular side of the membrane; the sequence is YPEIR. Residues 271-289 form a helical membrane-spanning segment; that stretch reads LNRLLRISRMFEFFQRTET. At 290-296 the chain is on the cytoplasmic side; the sequence is RTNYPNI. The segment at 294 to 402 is ion conduction pathway; sequence PNIFRISNLV…GNIGSMISNM (109 aa). A helical transmembrane segment spans residues 297–320; it reads FRISNLVMYIVIIIHWNACVYFSI. Topologically, residues 321–343 are extracellular; sequence SKAIGFGNDTWVYPDVNDPEFGR. Asn-328 carries N-linked (GlcNAc...) asparagine glycosylation. Transmembrane regions (helical) follow at residues 344–378 and 379–403; these read LARK…VFVV and VDFL…SNMN. Positions 361–364 are selectivity filter; that stretch reads TIGE. Residues 404 to 480 are C-linker; it reads AARAEFQARI…DTLKKVRIFA (77 aa). Residues 404 to 691 lie on the Cytoplasmic side of the membrane; sequence AARAEFQARI…ESRPLDSTQD (288 aa). The interval 484–604 is cyclic nucleotide-binding domain; sequence AGLLVELVLK…EEKGKQILMK (121 aa). 4 residues coordinate 3',5'-cyclic GMP: Gly-544, Ser-547, Arg-560, and Thr-561. The 3',5'-cyclic AMP site is built by Arg-560 and Thr-561. The stretch at 622 to 676 forms a coiled coil; that stretch reads LEEKVTRMEGSVDLLQTRFARILAEYESMQQKLKQRLTKVERFLKPIIDTEFSAL.

Belongs to the cyclic nucleotide-gated cation channel (TC 1.A.1.5) family. CNGA1 subfamily. As to quaternary structure, forms heterotetrameric channels composed of CNGA1 and CNGB1 subunits with 3:1 stoichiometry. May also form cyclic nucleotide-activated homotetrameric channels, that are efficiently activated by saturating cGMP, but poorly activated by saturating cAMP compared to the heterotetramer with CNGB1. The channel binds Ca(2+)-bound CALM1 via CaM1 and CaM2 regions of the CNGB1 subunit; this interaction modulates the affinity of the channel for cNMPs in response to intracellular Ca(2+) levels.

The protein localises to the cell membrane. It catalyses the reaction Ca(2+)(in) = Ca(2+)(out). The catalysed reaction is Na(+)(in) = Na(+)(out). The enzyme catalyses K(+)(in) = K(+)(out). It carries out the reaction NH4(+)(in) = NH4(+)(out). It catalyses the reaction Rb(+)(in) = Rb(+)(out). The catalysed reaction is Li(+)(in) = Li(+)(out). The enzyme catalyses Cs(+)(in) = Cs(+)(out). In terms of biological role, pore-forming subunit of the rod cyclic nucleotide-gated channel. Mediates rod photoresponses at dim light converting transient changes in intracellular cGMP levels into electrical signals. In the dark, cGMP levels are high and keep the channel open enabling a steady inward current carried by Na(+) and Ca(2+) ions that leads to membrane depolarization and neurotransmitter release from synaptic terminals. Upon photon absorption cGMP levels decline leading to channel closure and membrane hyperpolarization that ultimately slows neurotransmitter release and signals the presence of light, the end point of the phototransduction cascade. Conducts cGMP- and cAMP-gated ion currents, with permeability for monovalent and divalent cations. The selectivity for Ca(2+) over Na(+) increases with cGMP concentrations, whereas the selectivity among monovalent ions is independent of the cGMP levels. This Canis lupus familiaris (Dog) protein is Cyclic nucleotide-gated channel alpha-1.